A 292-amino-acid polypeptide reads, in one-letter code: Formamidopyrimidine-DNA glycosylase (292 aa).

The active-site Schiff-base intermediate with DNA is the Pro-2. Residue Glu-3 is the Proton donor of the active site. Lys-58 acts as the Proton donor; for beta-elimination activity in catalysis. The DNA site is built by His-103, Arg-122, and Lys-165. The segment at 256–292 adopts an FPG-type zinc-finger fold; the sequence is RVYDRALHPCPTPGCKGEISRITQGGRSSFFCSMCQK. The active-site Proton donor; for delta-elimination activity is Arg-282.

The protein belongs to the FPG family. Monomer. Zn(2+) is required as a cofactor.

It carries out the reaction Hydrolysis of DNA containing ring-opened 7-methylguanine residues, releasing 2,6-diamino-4-hydroxy-5-(N-methyl)formamidopyrimidine.. The enzyme catalyses 2'-deoxyribonucleotide-(2'-deoxyribose 5'-phosphate)-2'-deoxyribonucleotide-DNA = a 3'-end 2'-deoxyribonucleotide-(2,3-dehydro-2,3-deoxyribose 5'-phosphate)-DNA + a 5'-end 5'-phospho-2'-deoxyribonucleoside-DNA + H(+). Its function is as follows. Involved in base excision repair of DNA damaged by oxidation or by mutagenic agents. Acts as a DNA glycosylase that recognizes and removes damaged bases. Has a preference for oxidized purines, such as 7,8-dihydro-8-oxoguanine (8-oxoG). Has AP (apurinic/apyrimidinic) lyase activity and introduces nicks in the DNA strand. Cleaves the DNA backbone by beta-delta elimination to generate a single-strand break at the site of the removed base with both 3'- and 5'-phosphates. This is Formamidopyrimidine-DNA glycosylase from Methylocella silvestris (strain DSM 15510 / CIP 108128 / LMG 27833 / NCIMB 13906 / BL2).